The following is a 509-amino-acid chain: Maturase K (509 aa).

The protein belongs to the intron maturase 2 family. MatK subfamily.

The protein localises to the plastid. It localises to the chloroplast. In terms of biological role, usually encoded in the trnK tRNA gene intron. Probably assists in splicing its own and other chloroplast group II introns. This chain is Maturase K, found in Citrus sinensis (Sweet orange).